A 336-amino-acid chain; its full sequence is Ornithine carbamoyltransferase, catabolic (336 aa).

Residues Ser62–Thr65, Gln89, Arg113, and His140–Gln143 each bind carbamoyl phosphate. L-ornithine is bound by residues Asn172, Asp236, and Ser240–Met241. Residues Cys277–Leu278 and Arg322 contribute to the carbamoyl phosphate site.

This sequence belongs to the aspartate/ornithine carbamoyltransferase superfamily. OTCase family.

It is found in the cytoplasm. It catalyses the reaction carbamoyl phosphate + L-ornithine = L-citrulline + phosphate + H(+). It participates in amino-acid degradation; L-arginine degradation via ADI pathway; carbamoyl phosphate from L-arginine: step 2/2. Functionally, reversibly catalyzes the transfer of the carbamoyl group from carbamoyl phosphate (CP) to the N(epsilon) atom of ornithine (ORN) to produce L-citrulline. This Staphylococcus aureus (strain MSSA476) protein is Ornithine carbamoyltransferase, catabolic.